Consider the following 391-residue polypeptide: Probable tRNA sulfurtransferase (391 aa).

A THUMP domain is found at 60-167 (DEIIDHIKKV…KDNCYVYTDR (108 aa)). ATP is bound by residues 185–186 (LL), 210–211 (HF), Arg-267, Gly-289, and Gln-298.

The protein belongs to the ThiI family.

It localises to the cytoplasm. It carries out the reaction [ThiI sulfur-carrier protein]-S-sulfanyl-L-cysteine + a uridine in tRNA + 2 reduced [2Fe-2S]-[ferredoxin] + ATP + H(+) = [ThiI sulfur-carrier protein]-L-cysteine + a 4-thiouridine in tRNA + 2 oxidized [2Fe-2S]-[ferredoxin] + AMP + diphosphate. It catalyses the reaction [ThiS sulfur-carrier protein]-C-terminal Gly-Gly-AMP + S-sulfanyl-L-cysteinyl-[cysteine desulfurase] + AH2 = [ThiS sulfur-carrier protein]-C-terminal-Gly-aminoethanethioate + L-cysteinyl-[cysteine desulfurase] + A + AMP + 2 H(+). It functions in the pathway cofactor biosynthesis; thiamine diphosphate biosynthesis. In terms of biological role, catalyzes the ATP-dependent transfer of a sulfur to tRNA to produce 4-thiouridine in position 8 of tRNAs, which functions as a near-UV photosensor. Also catalyzes the transfer of sulfur to the sulfur carrier protein ThiS, forming ThiS-thiocarboxylate. This is a step in the synthesis of thiazole, in the thiamine biosynthesis pathway. The sulfur is donated as persulfide by IscS. The polypeptide is Probable tRNA sulfurtransferase (Finegoldia magna (strain ATCC 29328 / DSM 20472 / WAL 2508) (Peptostreptococcus magnus)).